The sequence spans 464 residues: Putative dipeptidase CPC735_014430 (464 aa).

The disordered stretch occupies residues 1–34; it reads MSTMSARDNEKGSARSQPSHAAASEIENVPRPSR. The helical transmembrane segment at 40–56 threads the bilayer; that stretch reads GTMIKVFIICACAGIVS. Zn(2+) contacts are provided by His93, Asp95, and Glu206. Cys145 and Cys235 are disulfide-bonded. His233 serves as a coordination point for substrate. 2 residues coordinate Zn(2+): His277 and His298. 2 residues coordinate substrate: Arg309 and Asp369. Residue Asn382 is glycosylated (N-linked (GlcNAc...) asparagine).

The protein belongs to the metallo-dependent hydrolases superfamily. Peptidase M19 family. Requires Zn(2+) as cofactor.

The protein localises to the membrane. It carries out the reaction an L-aminoacyl-L-amino acid + H2O = 2 an L-alpha-amino acid. Functionally, hydrolyzes a wide range of dipeptides. This is Putative dipeptidase CPC735_014430 from Coccidioides posadasii (strain C735) (Valley fever fungus).